Reading from the N-terminus, the 257-residue chain is Glutamate racemase (257 aa).

Residues 12 to 13 (DS) and 44 to 45 (YG) contribute to the substrate site. The active-site Proton donor/acceptor is the Cys-75. 76–77 (NT) provides a ligand contact to substrate. The active-site Proton donor/acceptor is the Cys-185. 186–187 (TH) is a binding site for substrate.

Belongs to the aspartate/glutamate racemases family.

The catalysed reaction is L-glutamate = D-glutamate. It participates in cell wall biogenesis; peptidoglycan biosynthesis. In terms of biological role, provides the (R)-glutamate required for cell wall biosynthesis. The protein is Glutamate racemase of Clostridium botulinum (strain Okra / Type B1).